Consider the following 314-residue polypeptide: A-kinase anchor protein 7 isoform gamma (314 aa).

The interval 1 to 46 (MPFAAVDIQDDCGSPDVPQANPKRSKEEEEDRGDKNDHVKKRKKAK) is disordered. A compositionally biased stretch (basic and acidic residues) spans 24–37 (RSKEEEEDRGDKND). Residues T95 and 185-187 (HLT) each bind AMP. CMP-binding positions include T95 and 185 to 187 (HLT). The segment at 260-314 (AELVRLSKRLVENAVLKAVQQYLEETQNKKQPGEGNSTKAEEGDRNGDGSDNNRK) is PKA-RII-alpha subunit binding domain. The interval 261–285 (ELVRLSKRLVENAVLKAVQQYLEET) is RI-alpha-binding. An RII-binding region spans residues 262 to 275 (LVRLSKRLVENAVL). A disordered region spans residues 281–314 (YLEETQNKKQPGEGNSTKAEEGDRNGDGSDNNRK). Residues 298 to 314 (KAEEGDRNGDGSDNNRK) are compositionally biased toward basic and acidic residues.

Binds cAMP-dependent protein kinase (PKA). Interacts with PRKCA; only the cytoplasmic form is capable of interacting with PRKCA. In terms of tissue distribution, expressed in oocytes.

The protein resides in the nucleus. It is found in the cytoplasm. Probably targets cAMP-dependent protein kinase (PKA) to the cellular membrane or cytoskeletal structures. The membrane-associated form reduces epithelial sodium channel (ENaC) activity, whereas the free cytoplasmic form may negatively regulate ENaC channel feedback inhibition by intracellular sodium. This is A-kinase anchor protein 7 isoform gamma from Mus musculus (Mouse).